Consider the following 701-residue polypeptide: Elongation factor G (701 aa).

Residues 8 to 291 form the tr-type G domain; it reads SRYRNIGIVA…AVIDYLPAPI (284 aa). Residues 17-24, 89-93, and 143-146 each bind GTP; these read AHVDAGKT, DTPGH, and NKMD.

This sequence belongs to the TRAFAC class translation factor GTPase superfamily. Classic translation factor GTPase family. EF-G/EF-2 subfamily.

The protein resides in the cytoplasm. Catalyzes the GTP-dependent ribosomal translocation step during translation elongation. During this step, the ribosome changes from the pre-translocational (PRE) to the post-translocational (POST) state as the newly formed A-site-bound peptidyl-tRNA and P-site-bound deacylated tRNA move to the P and E sites, respectively. Catalyzes the coordinated movement of the two tRNA molecules, the mRNA and conformational changes in the ribosome. This is Elongation factor G from Pseudomonas syringae pv. tomato (strain ATCC BAA-871 / DC3000).